The following is a 640-amino-acid chain: Chaperone protein DnaK (640 aa).

Thr198 carries the phosphothreonine; by autocatalysis modification. Positions 600–640 are disordered; that stretch reads KTQGAGAEGSEQPHGEQEAGGAAKGETVVDADFEEVKDDKK. A compositionally biased stretch (acidic residues) spans 628–640; the sequence is VDADFEEVKDDKK.

Belongs to the heat shock protein 70 family.

Functionally, acts as a chaperone. This Geobacter sp. (strain M21) protein is Chaperone protein DnaK.